The chain runs to 500 residues: Aldehyde dehydrogenase, mitochondrial (500 aa).

N6-acetyllysine is present on residues lysine 35, lysine 56, lysine 61, and lysine 142. Position 245-250 (245-250) interacts with NAD(+); the sequence is GSTEVG. Glutamate 268 serves as the catalytic Proton acceptor. Cysteine 302 functions as the Nucleophile in the catalytic mechanism. Residues lysine 351, lysine 358, lysine 366, lysine 390, lysine 409, lysine 411, lysine 424, and lysine 434 each carry the N6-acetyllysine modification.

The protein belongs to the aldehyde dehydrogenase family. In terms of assembly, homotetramer. In response to mitochondrial stress, the precursor protein is ubiquitinated by the SIFI complex in the cytoplasm before mitochondrial import, leading to its degradation. Within the SIFI complex, UBR4 initiates ubiquitin chain that are further elongated or branched by KCMF1.

It localises to the mitochondrion matrix. The enzyme catalyses an aldehyde + NAD(+) + H2O = a carboxylate + NADH + 2 H(+). It functions in the pathway alcohol metabolism; ethanol degradation; acetate from ethanol: step 2/2. Functionally, required for clearance of cellular formaldehyde, a cytotoxic and carcinogenic metabolite that induces DNA damage. The polypeptide is Aldehyde dehydrogenase, mitochondrial (ALDH2) (Mesocricetus auratus (Golden hamster)).